The chain runs to 92 residues: Probable Fe(2+)-trafficking protein (92 aa).

The protein belongs to the Fe(2+)-trafficking protein family.

Could be a mediator in iron transactions between iron acquisition and iron-requiring processes, such as synthesis and/or repair of Fe-S clusters in biosynthetic enzymes. The protein is Probable Fe(2+)-trafficking protein of Shewanella pealeana (strain ATCC 700345 / ANG-SQ1).